A 122-amino-acid polypeptide reads, in one-letter code: HLMQFETLIKKIAGRSGVWFYGFYGCYCGSGGRGKPKDATDRCCFVHDCCYGKVTGCDPKMDFYTYSEENGVVVCGGDDPCKKQICECDRVAATCFRDNKTYDNNKYWFYPAKNCQEESEPC.

Intrachain disulfides connect Cys26-Cys115, Cys28-Cys44, Cys43-Cys95, Cys49-Cys122, Cys50-Cys88, Cys57-Cys81, and Cys75-Cys86. Ca(2+) is bound by residues Tyr27, Gly29, and Gly31. Residue His47 is part of the active site. Ca(2+) is bound at residue Asp48. Asp89 is an active-site residue.

Belongs to the phospholipase A2 family. Group II subfamily. D49 sub-subfamily. Ca(2+) is required as a cofactor. Post-translationally, contains 7 disulfide bonds. Expressed by the venom gland.

The protein localises to the secreted. The enzyme catalyses a 1,2-diacyl-sn-glycero-3-phosphocholine + H2O = a 1-acyl-sn-glycero-3-phosphocholine + a fatty acid + H(+). In terms of biological role, snake venom phospholipase A2 (PLA2) that displays low systemic toxicity and causes severe symptoms only at very high concentrations (15 mg/kg). Has neither coagulant nor anticoagulant activity. PLA2 catalyzes the calcium-dependent hydrolysis of the 2-acyl groups in 3-sn-phosphoglycerides. The chain is Acidic phospholipase A2 from Bothrops ammodytoides (Yararanata).